A 251-amino-acid polypeptide reads, in one-letter code: tRNA (guanine-N(7)-)-methyltransferase (251 aa).

Positions M1–S43 are disordered. Residues P29–G40 show a composition bias toward basic residues. Positions 82, 107, 134, and 157 each coordinate S-adenosyl-L-methionine. D157 is an active-site residue. K161 serves as a coordination point for substrate. Residues R163–R168 are interaction with RNA. Residues D193 and T228 to E231 contribute to the substrate site.

Belongs to the class I-like SAM-binding methyltransferase superfamily. TrmB family.

The catalysed reaction is guanosine(46) in tRNA + S-adenosyl-L-methionine = N(7)-methylguanosine(46) in tRNA + S-adenosyl-L-homocysteine. The protein operates within tRNA modification; N(7)-methylguanine-tRNA biosynthesis. Its function is as follows. Catalyzes the formation of N(7)-methylguanine at position 46 (m7G46) in tRNA. This Ralstonia nicotianae (strain ATCC BAA-1114 / GMI1000) (Ralstonia solanacearum) protein is tRNA (guanine-N(7)-)-methyltransferase.